The following is a 156-amino-acid chain: Small ribosomal subunit protein uS7 (156 aa).

It belongs to the universal ribosomal protein uS7 family. In terms of assembly, part of the 30S ribosomal subunit. Contacts proteins S9 and S11.

Its function is as follows. One of the primary rRNA binding proteins, it binds directly to 16S rRNA where it nucleates assembly of the head domain of the 30S subunit. Is located at the subunit interface close to the decoding center, probably blocks exit of the E-site tRNA. The protein is Small ribosomal subunit protein uS7 of Cupriavidus metallidurans (strain ATCC 43123 / DSM 2839 / NBRC 102507 / CH34) (Ralstonia metallidurans).